A 319-amino-acid chain; its full sequence is CD2 antigen cytoplasmic tail-binding protein 2 homolog (319 aa).

2 disordered regions span residues 1–57 and 105–124; these read MASK…EDDV and NAFD…KNEP. Basic and acidic residues predominate over residues 12 to 24; the sequence is KVKEESFKKHTLD. Phosphoserine is present on residues S25 and S30. The segment covering 25–47 has biased composition (acidic residues); it reads SDEEDSDDYEREYLNDSDIEGGE. At Y37 the chain carries Phosphotyrosine. A Phosphoserine modification is found at S41. Residues 109–124 show a composition bias toward basic and acidic residues; the sequence is PAKDEENSSDEEKNEP. The GYF domain occupies 260-316; the sequence is EVTWEFKWSQDETDIQGPFSTEKMLKWSQENYFKNGVYVRKCGENTNFYTSNRIDFD.

The protein resides in the nucleus. Its function is as follows. Required for embryonic epithelial tissue repair, but not for the assembly of the actomyosin cable at the wound edge. Probably acts downstream of rl in the regulation of Ddc and msn transcription to promote wound healing. This Drosophila melanogaster (Fruit fly) protein is CD2 antigen cytoplasmic tail-binding protein 2 homolog (holn1).